A 164-amino-acid polypeptide reads, in one-letter code: Probable ribosome biogenesis protein RLP24 (164 aa).

The protein belongs to the eukaryotic ribosomal protein eL24 family. As to quaternary structure, associated with nucleolar and cytoplasmic pre-60S particles. At the end of biogenesis it dissociates from cytoplasmic pre-60S particles and is likely to be exchanged for its ribosomal homolog, RPL24.

Its subcellular location is the cytoplasm. The protein resides in the nucleus. Involved in the biogenesis of the 60S ribosomal subunit. Ensures the docking of nog1 to pre-60S particles. Activates and recruits ATPase AFG2 to cytoplasmic pre-60S ribosomal particles. This chain is Probable ribosome biogenesis protein RLP24 (rlp24), found in Dictyostelium discoideum (Social amoeba).